The chain runs to 177 residues: Inorganic pyrophosphatase (177 aa).

Lysine 30, arginine 44, and tyrosine 56 together coordinate substrate. Residues aspartate 66, aspartate 71, and aspartate 103 each coordinate Mg(2+). Tyrosine 142 serves as a coordination point for substrate.

Belongs to the PPase family. As to quaternary structure, homohexamer. Requires Mg(2+) as cofactor.

Its subcellular location is the cytoplasm. It catalyses the reaction diphosphate + H2O = 2 phosphate + H(+). Its function is as follows. Catalyzes the hydrolysis of inorganic pyrophosphate (PPi) forming two phosphate ions. The sequence is that of Inorganic pyrophosphatase from Caulobacter vibrioides (strain ATCC 19089 / CIP 103742 / CB 15) (Caulobacter crescentus).